Reading from the N-terminus, the 158-residue chain is NAD(P)H-quinone oxidoreductase subunit N (158 aa).

It belongs to the complex I NdhN subunit family. NDH-1 can be composed of about 15 different subunits; different subcomplexes with different compositions have been identified which probably have different functions.

It is found in the cellular thylakoid membrane. The catalysed reaction is a plastoquinone + NADH + (n+1) H(+)(in) = a plastoquinol + NAD(+) + n H(+)(out). It carries out the reaction a plastoquinone + NADPH + (n+1) H(+)(in) = a plastoquinol + NADP(+) + n H(+)(out). Its function is as follows. NDH-1 shuttles electrons from an unknown electron donor, via FMN and iron-sulfur (Fe-S) centers, to quinones in the respiratory and/or the photosynthetic chain. The immediate electron acceptor for the enzyme in this species is believed to be plastoquinone. Couples the redox reaction to proton translocation, and thus conserves the redox energy in a proton gradient. Cyanobacterial NDH-1 also plays a role in inorganic carbon-concentration. The protein is NAD(P)H-quinone oxidoreductase subunit N of Rippkaea orientalis (strain PCC 8801 / RF-1) (Cyanothece sp. (strain PCC 8801)).